The chain runs to 494 residues: Membrane-bound lytic murein transglycosylase F (494 aa).

The N-terminal stretch at 1 to 20 is a signal peptide; sequence MIKYLYVILLGLLLSGCQPA. The tract at residues 21 to 259 is non-LT domain; it reads EVVEIEASPK…HLNEKYFGHV (239 aa). An LT domain region spans residues 260 to 494; it reads KRFDYVDTRA…LKPKLGAGQP (235 aa). E304 is a catalytic residue. The segment covering 473-485 has biased composition (polar residues); that stretch reads QSLASDSKTNNTL. Residues 473-494 are disordered; it reads QSLASDSKTNNTLKPKLGAGQP.

It in the N-terminal section; belongs to the bacterial solute-binding protein 3 family. The protein in the C-terminal section; belongs to the transglycosylase Slt family.

The protein resides in the cell outer membrane. The catalysed reaction is Exolytic cleavage of the (1-&gt;4)-beta-glycosidic linkage between N-acetylmuramic acid (MurNAc) and N-acetylglucosamine (GlcNAc) residues in peptidoglycan, from either the reducing or the non-reducing ends of the peptidoglycan chains, with concomitant formation of a 1,6-anhydrobond in the MurNAc residue.. Murein-degrading enzyme that degrades murein glycan strands and insoluble, high-molecular weight murein sacculi, with the concomitant formation of a 1,6-anhydromuramoyl product. Lytic transglycosylases (LTs) play an integral role in the metabolism of the peptidoglycan (PG) sacculus. Their lytic action creates space within the PG sacculus to allow for its expansion as well as for the insertion of various structures such as secretion systems and flagella. The protein is Membrane-bound lytic murein transglycosylase F of Shewanella denitrificans (strain OS217 / ATCC BAA-1090 / DSM 15013).